Here is a 103-residue protein sequence, read N- to C-terminus: Large ribosomal subunit protein bL21 (103 aa).

The protein belongs to the bacterial ribosomal protein bL21 family. Part of the 50S ribosomal subunit. Contacts protein L20.

This protein binds to 23S rRNA in the presence of protein L20. The sequence is that of Large ribosomal subunit protein bL21 from Nitrosospira multiformis (strain ATCC 25196 / NCIMB 11849 / C 71).